The sequence spans 216 residues: Minor capsid protein P6 (216 aa).

Residues 1–21 (MILVGIAVLILLAVFAILYYK) are hydrophobic.

In terms of assembly, interacts with the major capsid protein.

The protein resides in the virion. Functionally, one of the minor capsid proteins that constitute a network internal to the major capsid proteins and outside the lipid membrane. The minor capsid proteins glue and stabilize the capsomers. The protein is Minor capsid protein P6 of Paramecium bursaria Chlorella virus 1 (PBCV-1).